We begin with the raw amino-acid sequence, 67 residues long: Cold shock protein (67 aa).

The CSD domain occupies 4–64; the sequence is GTVKWFNAEK…GAKGPQATGV (61 aa).

It localises to the cytoplasm. The chain is Cold shock protein (csp) from Arthrobacter globiformis.